The primary structure comprises 240 residues: Cilia- and flagella-associated protein 77 (240 aa).

Belongs to the CFAP77 family.

The protein resides in the cytoplasm. It is found in the cytoskeleton. It localises to the cilium axoneme. Its subcellular location is the flagellum axoneme. Its function is as follows. Microtubule inner protein (MIP) part of the dynein-decorated doublet microtubules (DMTs) in cilia axoneme, which is required for motile cilia beating. The protein is Cilia- and flagella-associated protein 77 of Danio rerio (Zebrafish).